The sequence spans 262 residues: Indole-3-glycerol phosphate synthase (262 aa).

The protein belongs to the TrpC family.

The enzyme catalyses 1-(2-carboxyphenylamino)-1-deoxy-D-ribulose 5-phosphate + H(+) = (1S,2R)-1-C-(indol-3-yl)glycerol 3-phosphate + CO2 + H2O. The protein operates within amino-acid biosynthesis; L-tryptophan biosynthesis; L-tryptophan from chorismate: step 4/5. This Clostridium kluyveri (strain NBRC 12016) protein is Indole-3-glycerol phosphate synthase.